We begin with the raw amino-acid sequence, 246 residues long: Probable ABC transporter permease protein BMEII0107 (246 aa).

The next 6 membrane-spanning stretches (helical) occupy residues 12-32 (LLSF…GAVV), 63-83 (VLSG…LMGW), 94-114 (WVQF…IVTL), 122-142 (IFVI…QGVI), 172-192 (VPFI…TVVA), and 211-231 (LYYD…LGLF). Positions 56-236 (IFASLRRVLS…ILGLFMDRLL (181 aa)) constitute an ABC transmembrane type-1 domain.

Belongs to the binding-protein-dependent transport system permease family. The complex is composed of two ATP-binding proteins (BMEII0108), two transmembrane proteins (BMEII0107) and a solute-binding protein (BMEII0109).

The protein localises to the cell inner membrane. In terms of biological role, probably part of an ABC transporter complex. Probably responsible for the translocation of the substrate across the membrane. The chain is Probable ABC transporter permease protein BMEII0107 from Brucella melitensis biotype 1 (strain ATCC 23456 / CCUG 17765 / NCTC 10094 / 16M).